We begin with the raw amino-acid sequence, 1416 residues long: Isonitrile lipopeptide synthase (1416 aa).

Residues 188–215 (LRETAKVAEALRRQADAVQRELTAEAGQ) adopt a coiled-coil conformation. The region spanning 965 to 1028 (RVWSRHLGRP…NLVCDLGSNP (64 aa)) is the Carrier domain. Position 988 is an O-(pantetheine 4'-phosphoryl)serine (serine 988).

This sequence belongs to the ATP-dependent AMP-binding enzyme family. Pantetheine 4'-phosphate is required as a cofactor.

It catalyses the reaction 2 a (3R)-3-isocyanyl-fatty acyl-[ACP] + L-lysine + ATP + 2 NADPH = an isonitrile lipopeptide + 2 holo-[ACP] + AMP + diphosphate + 2 NADP(+). Nonribosomal peptide synthetase (NRPS) involved in the biosynthesis of a unique class of isonitrile lipopeptides (INLPs) that seem to play a role in metal acquisition in M.marinum. Catalyzes the final step in the pathway, i.e. the condensation of a (3R)-3-isocyanyl-fatty acyl-[ACP] to both amino groups of a lysine, producing isonitrile lipopeptides. This chain is Isonitrile lipopeptide synthase, found in Mycobacterium marinum (strain ATCC BAA-535 / M).